The primary structure comprises 1724 residues: Protein CHROMATIN REMODELING 5 (1724 aa).

2 disordered regions span residues 24-88 (QNAA…QSST) and 104-415 (DCQP…DDIE). A compositionally biased stretch (polar residues) spans 25-34 (NAATFQSSPL). Basic and acidic residues predominate over residues 126–144 (EAYHSEDNHSNDRSEKLDS). Positions 138–164 (RSEKLDSENENDNENEEEDNEMNKHQS) form a coiled coil. Acidic residues-rich tracts occupy residues 145 to 157 (ENENDNENEEEDN), 170 to 186 (PADEMLSDEYYEQDEDN), 239 to 264 (ADMDYEEEEDEDDPEDADFEPYDAAD), and 278 to 297 (VSDEDPESDEEIDLSDYEDD). A compositionally biased stretch (basic residues) spans 301–313 (KKPKVRQQSKGFR). Residues 320–327 (ERKSFHVS) carry the Nuclear localization signal 1 motif. Residues 337–350 (QDDDSEEDSENDND) show a composition bias toward acidic residues. Residues 362–376 (TLRQNNGRSTNTIGQ) show a composition bias toward polar residues. A compositionally biased stretch (basic and acidic residues) spans 403–412 (DGKNRKNQKD). One can recognise a Chromo 1 domain in the interval 420-499 (DVIEKVLWHQ…FKKVLNYTKK (80 aa)). A coiled-coil region spans residues 505 to 525 (RYRTALSREEIEVNDVSKEMD). Residues 533 to 597 (SQVERIIADR…REVSIAVQGK (65 aa)) enclose the Chromo 2 domain. The Helicase ATP-binding domain maps to 637 to 809 (VNSWLNDTNV…WALLHFLDPG (173 aa)). 650–657 (DEMGLGKT) is a binding site for ATP. Residues 760 to 763 (DEAH) carry the DEAH box motif. The Helicase C-terminal domain occupies 943–1094 (ILDKLLVRLR…HLVIQKLNAE (152 aa)). Residues 1126–1163 (KEDKNDEESKKRLLSMDIDEILERAEQVEEKHTDETEH) are a coiled coil. Residues 1199–1245 (ALAPRAARNTKSYVDPSHPDRTSKRKKKGSEPPEHTERSQKRRKTEY) are disordered. 2 short sequence motifs (nuclear localization signal) span residues 1224–1231 (KKKGSEPP) and 1348–1355 (LKRVQGLQ). Residues 1227–1237 (GSEPPEHTERS) are compositionally biased toward basic and acidic residues. Disordered stretches follow at residues 1480 to 1524 (QFKA…EMSD) and 1654 to 1724 (KFKT…FPPR). A compositionally biased stretch (basic and acidic residues) spans 1504 to 1520 (DGPRKTQKAEPLVKEEG). Residues 1658–1667 (AGNSQGSQQV) show a composition bias toward polar residues. Basic and acidic residues predominate over residues 1669–1691 (KGIDTAKFEAWKRRRRTENDVQT). Positions 1692–1702 (ERPTITNSNSL) are enriched in polar residues.

Belongs to the SNF2/RAD54 helicase family.

It is found in the nucleus. DNA-binding helicase that specifically binds to the promoter of target genes, leading to chromatin remodeling, possibly by promoting deposition of histone H3.3. Probable chromatin remodeling factor. The chain is Protein CHROMATIN REMODELING 5 from Arabidopsis thaliana (Mouse-ear cress).